The primary structure comprises 153 residues: D-aminoacyl-tRNA deacylase (153 aa).

The short motif at 140-141 is the Gly-cisPro motif, important for rejection of L-amino acids element; it reads GP.

It belongs to the DTD family. As to quaternary structure, homodimer.

The protein resides in the cytoplasm. It carries out the reaction glycyl-tRNA(Ala) + H2O = tRNA(Ala) + glycine + H(+). It catalyses the reaction a D-aminoacyl-tRNA + H2O = a tRNA + a D-alpha-amino acid + H(+). In terms of biological role, an aminoacyl-tRNA editing enzyme that deacylates mischarged D-aminoacyl-tRNAs. Also deacylates mischarged glycyl-tRNA(Ala), protecting cells against glycine mischarging by AlaRS. Acts via tRNA-based rather than protein-based catalysis; rejects L-amino acids rather than detecting D-amino acids in the active site. By recycling D-aminoacyl-tRNA to D-amino acids and free tRNA molecules, this enzyme counteracts the toxicity associated with the formation of D-aminoacyl-tRNA entities in vivo and helps enforce protein L-homochirality. The sequence is that of D-aminoacyl-tRNA deacylase from Trichodesmium erythraeum (strain IMS101).